The following is a 180-amino-acid chain: Small ribosomal subunit protein uS5 (180 aa).

Residues methionine 1–aspartate 20 form a disordered region. The S5 DRBM domain maps to leucine 22 to valine 85.

The protein belongs to the universal ribosomal protein uS5 family. In terms of assembly, part of the 30S ribosomal subunit. Contacts proteins S4 and S8.

In terms of biological role, with S4 and S12 plays an important role in translational accuracy. Located at the back of the 30S subunit body where it stabilizes the conformation of the head with respect to the body. The polypeptide is Small ribosomal subunit protein uS5 (Nitrosospira multiformis (strain ATCC 25196 / NCIMB 11849 / C 71)).